Reading from the N-terminus, the 474-residue chain is Neuronal acetylcholine receptor subunit eat-2 (474 aa).

Residues 1–21 form the signal peptide; that stretch reads MTLKIAFFTLILLVSIERVYS. Over 22 to 237 the chain is Extracellular; sequence SDEEYRLLKD…MHLKRRTMYY (216 aa). N95 carries an N-linked (GlcNAc...) asparagine glycan. A disulfide bridge connects residues C149 and C163. Helical transmembrane passes span 238 to 258, 266 to 286, and 303 to 323; these read GLNWIVPSILISLSNILGFTM, ITLQITNFLSVMVFLAMVSEV, and LSIVILGLSICASLIIVNIFF. At 324–440 the chain is on the cytoplasmic side; that stretch reads RHPKTHRMGD…WRFMAMVIDR (117 aa). A disordered region spans residues 359 to 378; the sequence is PRREEEKNDEEAGGDGTKLL. A helical membrane pass occupies residues 441–461; sequence LSLFLFTGLIFGTTALIFAFC.

Belongs to the ligand-gated ion channel (TC 1.A.9) family. Acetylcholine receptor (TC 1.A.9.1) subfamily. Neuronal AChR seems to be composed of two different type of subunits: alpha and beta. As to expression, expressed in pharyngeal muscle.

It localises to the postsynaptic cell membrane. The protein localises to the cell membrane. After binding acetylcholine, the AChR responds by an extensive change in conformation that affects all subunits and leads to opening of an ion-conducting channel across the plasma membrane. Nicotinic acetylcholine receptor in the MC pharyngeal motor neuron involved in pharyngeal pumping. Has a role in the determination of life span possibly via calorific restriction which affects growth rate, although this is independent of metabolic activity. Plays a role in the defense against the accumulation of ingested live pathogenic bacteria in the intestine. The polypeptide is Neuronal acetylcholine receptor subunit eat-2 (Caenorhabditis elegans).